Consider the following 217-residue polypeptide: Adenylate kinase (217 aa).

An ATP-binding site is contributed by 10–15 (GAGKGT). Positions 30–59 (STGDMFRAAMKEGTPLGLQAKQYMDRGDLV) are NMP. Residues threonine 31, arginine 36, 57-59 (DLV), 85-88 (GFPR), and glutamine 92 contribute to the AMP site. Positions 126–163 (GRRICRNCGATYHLIFHPPAKPGVCDKCGGELYQRADD) are LID. Arginine 127 contributes to the ATP binding site. Zn(2+) is bound by residues cysteine 130 and cysteine 133. 136-137 (TY) provides a ligand contact to ATP. Zn(2+) contacts are provided by cysteine 150 and cysteine 153. AMP-binding residues include arginine 160 and arginine 171. Glutamine 199 lines the ATP pocket.

The protein belongs to the adenylate kinase family. In terms of assembly, monomer.

Its subcellular location is the cytoplasm. It carries out the reaction AMP + ATP = 2 ADP. It participates in purine metabolism; AMP biosynthesis via salvage pathway; AMP from ADP: step 1/1. Functionally, catalyzes the reversible transfer of the terminal phosphate group between ATP and AMP. Plays an important role in cellular energy homeostasis and in adenine nucleotide metabolism. This Geobacillus stearothermophilus (Bacillus stearothermophilus) protein is Adenylate kinase.